The primary structure comprises 419 residues: Adenylosuccinate synthetase 1 (419 aa).

11–17 (GDEGKGK) contacts GTP. The Proton acceptor role is filled by aspartate 12. Mg(2+)-binding residues include aspartate 12 and glycine 39. IMP is bound by residues 12–15 (DEGK), 37–40 (NAGH), arginine 138, glutamine 220, and arginine 298. Histidine 40 functions as the Proton donor in the catalytic mechanism. A substrate-binding site is contributed by 294-300 (TVSKRPR). GTP-binding positions include arginine 300, 326–328 (NVD), and 407–409 (SYG).

The protein belongs to the adenylosuccinate synthetase family. Homodimer. Requires Mg(2+) as cofactor.

Its subcellular location is the cytoplasm. It carries out the reaction IMP + L-aspartate + GTP = N(6)-(1,2-dicarboxyethyl)-AMP + GDP + phosphate + 2 H(+). It functions in the pathway purine metabolism; AMP biosynthesis via de novo pathway; AMP from IMP: step 1/2. Plays an important role in the de novo pathway of purine nucleotide biosynthesis. Catalyzes the first committed step in the biosynthesis of AMP from IMP. This is Adenylosuccinate synthetase 1 from Photorhabdus laumondii subsp. laumondii (strain DSM 15139 / CIP 105565 / TT01) (Photorhabdus luminescens subsp. laumondii).